Reading from the N-terminus, the 270-residue chain is Formamidopyrimidine-DNA glycosylase (270 aa).

The active-site Schiff-base intermediate with DNA is P2. E3 functions as the Proton donor in the catalytic mechanism. K56 functions as the Proton donor; for beta-elimination activity in the catalytic mechanism. Positions 89, 107, and 151 each coordinate DNA. The FPG-type zinc-finger motif lies at 236-270; that stretch reads TVYGRAGEPCRVCATPIRLLRQGQRSTYYCPNCQK. R260 serves as the catalytic Proton donor; for delta-elimination activity.

This sequence belongs to the FPG family. Monomer. It depends on Zn(2+) as a cofactor.

The enzyme catalyses Hydrolysis of DNA containing ring-opened 7-methylguanine residues, releasing 2,6-diamino-4-hydroxy-5-(N-methyl)formamidopyrimidine.. It catalyses the reaction 2'-deoxyribonucleotide-(2'-deoxyribose 5'-phosphate)-2'-deoxyribonucleotide-DNA = a 3'-end 2'-deoxyribonucleotide-(2,3-dehydro-2,3-deoxyribose 5'-phosphate)-DNA + a 5'-end 5'-phospho-2'-deoxyribonucleoside-DNA + H(+). Functionally, involved in base excision repair of DNA damaged by oxidation or by mutagenic agents. Acts as a DNA glycosylase that recognizes and removes damaged bases. Has a preference for oxidized purines, such as 7,8-dihydro-8-oxoguanine (8-oxoG). Has AP (apurinic/apyrimidinic) lyase activity and introduces nicks in the DNA strand. Cleaves the DNA backbone by beta-delta elimination to generate a single-strand break at the site of the removed base with both 3'- and 5'-phosphates. The polypeptide is Formamidopyrimidine-DNA glycosylase (Variovorax paradoxus (strain S110)).